The sequence spans 325 residues: NADH-quinone oxidoreductase subunit H (325 aa).

Transmembrane regions (helical) follow at residues 11 to 31 (ILLT…CGAF), 81 to 101 (VIFT…FAIV), 114 to 134 (IGIL…LFAG), 154 to 174 (LSYE…AGSF), 186 to 206 (VWNV…GVAV), 237 to 257 (FFVG…TLFF), 265 to 285 (LPPF…FILI), and 304 to 324 (ICLP…LWQA).

This sequence belongs to the complex I subunit 1 family. NDH-1 is composed of 13 different subunits. Subunits NuoA, H, J, K, L, M, N constitute the membrane sector of the complex.

It is found in the cell inner membrane. The catalysed reaction is a quinone + NADH + 5 H(+)(in) = a quinol + NAD(+) + 4 H(+)(out). Its function is as follows. NDH-1 shuttles electrons from NADH, via FMN and iron-sulfur (Fe-S) centers, to quinones in the respiratory chain. The immediate electron acceptor for the enzyme in this species is believed to be ubiquinone. Couples the redox reaction to proton translocation (for every two electrons transferred, four hydrogen ions are translocated across the cytoplasmic membrane), and thus conserves the redox energy in a proton gradient. This subunit may bind ubiquinone. The polypeptide is NADH-quinone oxidoreductase subunit H (Escherichia coli O7:K1 (strain IAI39 / ExPEC)).